A 369-amino-acid polypeptide reads, in one-letter code: Homoserine O-succinyltransferase (369 aa).

Positions 90-93 are important for substrate specificity; it reads GISA. Positions 107–353 constitute an AB hydrolase-1 domain; that stretch reads WWSGAVGVRA…YGHDAFLKED (247 aa). The Nucleophile role is filled by Ser-175. Residue Arg-236 participates in substrate binding. Active-site residues include Asp-316 and His-346. Residue Asp-347 participates in substrate binding.

Belongs to the AB hydrolase superfamily. MetX family. In terms of assembly, homodimer.

Its subcellular location is the cytoplasm. It catalyses the reaction L-homoserine + succinyl-CoA = O-succinyl-L-homoserine + CoA. It participates in amino-acid biosynthesis; L-methionine biosynthesis via de novo pathway; O-succinyl-L-homoserine from L-homoserine: step 1/1. Its function is as follows. Transfers a succinyl group from succinyl-CoA to L-homoserine, forming succinyl-L-homoserine. This is Homoserine O-succinyltransferase from Brevundimonas diminuta (strain ATCC 11568 / DSM 7234 / NBRC 12697 / NCIMB 9393 / NCTC 8545).